Here is a 212-residue protein sequence, read N- to C-terminus: Large ribosomal subunit protein uL3 (212 aa).

Residue glutamine 154 is modified to N5-methylglutamine.

The protein belongs to the universal ribosomal protein uL3 family. In terms of assembly, part of the 50S ribosomal subunit. Forms a cluster with proteins L14 and L19. Post-translationally, methylated by PrmB.

Its function is as follows. One of the primary rRNA binding proteins, it binds directly near the 3'-end of the 23S rRNA, where it nucleates assembly of the 50S subunit. In Hydrogenovibrio crunogenus (strain DSM 25203 / XCL-2) (Thiomicrospira crunogena), this protein is Large ribosomal subunit protein uL3.